Here is a 578-residue protein sequence, read N- to C-terminus: Proline--tRNA ligase (578 aa).

It belongs to the class-II aminoacyl-tRNA synthetase family. ProS type 1 subfamily. In terms of assembly, homodimer.

The protein localises to the cytoplasm. It catalyses the reaction tRNA(Pro) + L-proline + ATP = L-prolyl-tRNA(Pro) + AMP + diphosphate. Its function is as follows. Catalyzes the attachment of proline to tRNA(Pro) in a two-step reaction: proline is first activated by ATP to form Pro-AMP and then transferred to the acceptor end of tRNA(Pro). As ProRS can inadvertently accommodate and process non-cognate amino acids such as alanine and cysteine, to avoid such errors it has two additional distinct editing activities against alanine. One activity is designated as 'pretransfer' editing and involves the tRNA(Pro)-independent hydrolysis of activated Ala-AMP. The other activity is designated 'posttransfer' editing and involves deacylation of mischarged Ala-tRNA(Pro). The misacylated Cys-tRNA(Pro) is not edited by ProRS. The polypeptide is Proline--tRNA ligase (Paraburkholderia phymatum (strain DSM 17167 / CIP 108236 / LMG 21445 / STM815) (Burkholderia phymatum)).